Consider the following 63-residue polypeptide: Large ribosomal subunit protein bL35 (63 aa).

Belongs to the bacterial ribosomal protein bL35 family.

The sequence is that of Large ribosomal subunit protein bL35 from Campylobacter concisus (strain 13826).